A 179-amino-acid chain; its full sequence is Large ribosomal subunit protein uL6 (179 aa).

Belongs to the universal ribosomal protein uL6 family. Part of the 50S ribosomal subunit.

In terms of biological role, this protein binds to the 23S rRNA, and is important in its secondary structure. It is located near the subunit interface in the base of the L7/L12 stalk, and near the tRNA binding site of the peptidyltransferase center. In Parasynechococcus marenigrum (strain WH8102), this protein is Large ribosomal subunit protein uL6.